The primary structure comprises 1241 residues: Nephrin (1241 aa).

Residues 1 to 22 (MALGTTLRASLLLLGLLTEGLA) form the signal peptide. At 23–1055 (QLAIPASVPR…EDQLPTEPPS (1033 aa)) the chain is on the extracellular side. 6 consecutive Ig-like C2-type domains span residues 27–130 (PASV…VILS), 143–234 (EAGT…SFTV), 242–333 (PPVI…HGIT), 340–434 (PSAI…KSLI), 440–540 (PAQK…TQLA), and 544–635 (PPTN…ETVS). Asn-40 carries N-linked (GlcNAc...) asparagine glycosylation. 3 cysteine pairs are disulfide-bonded: Cys-53–Cys-111, Cys-160–Cys-217, and Cys-265–Cys-317. Asn-356 and Asn-401 each carry an N-linked (GlcNAc...) asparagine glycan. Cys-361 and Cys-417 are joined by a disulfide. Ser-432 carries the phosphoserine modification. Residues Cys-465 and Cys-528 are joined by a disulfide bond. Asn-547, Asn-553, Asn-564, Asn-577, Asn-680, and Asn-708 each carry an N-linked (GlcNAc...) asparagine glycan. Cys-567 and Cys-623 are disulfide-bonded. Ig-like C2-type domains lie at 740-832 (PTIR…LLRL) and 838-939 (PQVE…VSIS). Disulfide bonds link Cys-761–Cys-816 and Cys-863–Cys-920. Residue Asn-908 is glycosylated (N-linked (GlcNAc...) asparagine). One can recognise a Fibronectin type-III domain in the interval 943–1038 (PPSGLKVVSL…TQLPITTPGL (96 aa)). The tract at residues 1025-1057 (ADKGTQLPITTPGLHQPSGEPEDQLPTEPPSGP) is disordered. A helical transmembrane segment spans residues 1056–1076 (GPSGLPLLPVLFALGGLLLLS). Over 1077 to 1241 (NASCVGGVLW…LPFELRGHLV (165 aa)) the chain is Cytoplasmic. Position 1098 is a phosphoserine (Ser-1098). Over residues 1099 to 1114 (EKTEAGSEEDRVRNEY) the composition is skewed to basic and acidic residues. The segment at 1099–1137 (EKTEAGSEEDRVRNEYEESQWTGERDTQSSTVSTTEAEP) is disordered. Thr-1101 carries the phosphothreonine modification. Residue Ser-1105 is modified to Phosphoserine. Positions 1160–1241 (RGFTGEDEDM…LPFELRGHLV (82 aa)) are binds to NPHS2. Tyr-1193 is modified (phosphotyrosine; by FYN).

Belongs to the immunoglobulin superfamily. Interacts with CD2AP (via C-terminal domain). Interacts with MAGI1 (via PDZ 2 and 3 domains) forming a tripartite complex with IGSF5/JAM4. Interacts with DDN; the interaction is direct. Self-associates (via the Ig-like domains). Also interacts (via the Ig-like domains) with KIRREL1/NEPH1 and KIRREL2; the interaction with KIRREL1 is dependent on KIRREL1 glycosylation. Interacts with KIRREL3. Forms a complex with ACTN4, CASK, IQGAP1, MAGI2, SPTAN1 and SPTBN1. Interacts with NPHS2. Interacts with phosphatidylinositol 3-kinase regulatory subunit PIK3R1; the interaction is reduced by high glucose levels. In terms of processing, phosphorylated at Tyr-1193 by FYN, leading to the recruitment and activation of phospholipase C-gamma-1/PLCG1. Tyrosine phosphorylation is reduced by high glucose levels. Dephosphorylated by tensin TNS2 which leads to reduced binding of NPHN1 to PIK3R1. Specifically expressed in podocytes of kidney glomeruli.

Its subcellular location is the cell membrane. Seems to play a role in the development or function of the kidney glomerular filtration barrier. Regulates glomerular vascular permeability. May anchor the podocyte slit diaphragm to the actin cytoskeleton. Plays a role in skeletal muscle formation through regulation of myoblast fusion. This chain is Nephrin (NPHS1), found in Homo sapiens (Human).